Consider the following 514-residue polypeptide: Peptide chain release factor 3 (514 aa).

A tr-type G domain is found at 8 to 268; it reads KKRRTFAIIS…IFLKFAPEPH (261 aa). Residues 17 to 24, 85 to 89, and 139 to 142 each bind GTP; these read SHPDAGKT, DTPGH, and NKLD.

Belongs to the TRAFAC class translation factor GTPase superfamily. Classic translation factor GTPase family. PrfC subfamily.

The protein resides in the cytoplasm. In terms of biological role, increases the formation of ribosomal termination complexes and stimulates activities of RF-1 and RF-2. It binds guanine nucleotides and has strong preference for UGA stop codons. It may interact directly with the ribosome. The stimulation of RF-1 and RF-2 is significantly reduced by GTP and GDP, but not by GMP. The protein is Peptide chain release factor 3 of Streptococcus pneumoniae (strain CGSP14).